We begin with the raw amino-acid sequence, 405 residues long: Cytochrome b (405 aa).

The chain crosses the membrane as a helical span at residues 44–64; that stretch reads FGSLAGIAMIIMIATGIFLAM. His94 and His108 together coordinate heme b. Helical transmembrane passes span 97 to 117, 124 to 144, 163 to 183, 191 to 211, 245 to 265, 303 to 323, 338 to 358, and 368 to 388; these read GASM…YYGS, VLWW…FMGY, FSAI…GFSV, FFSL…LHMW, FGLG…PNFF, LGGV…PWLD, GFFW…AMPA, and LATI…GWFE. 2 residues coordinate heme b: His195 and His209.

The protein belongs to the cytochrome b family. The main subunits of complex b-c1 are: cytochrome b, cytochrome c1 and the Rieske protein. The cofactor is heme b.

It localises to the cell membrane. Its function is as follows. Component of the ubiquinol-cytochrome c reductase complex (complex III or cytochrome b-c1 complex), which is a respiratory chain that generates an electrochemical potential coupled to ATP synthesis. In Rhodospirillum rubrum, this protein is Cytochrome b (petB).